We begin with the raw amino-acid sequence, 314 residues long: Putative gluconeogenesis factor (314 aa).

The protein belongs to the gluconeogenesis factor family.

Its subcellular location is the cytoplasm. Its function is as follows. Required for morphogenesis under gluconeogenic growth conditions. This chain is Putative gluconeogenesis factor, found in Thermotoga maritima (strain ATCC 43589 / DSM 3109 / JCM 10099 / NBRC 100826 / MSB8).